The chain runs to 386 residues: Phosphate acyltransferase (386 aa).

Residues proline 359–threonine 386 are disordered. The span at glutamine 377–threonine 386 shows a compositional bias: polar residues.

The protein belongs to the PlsX family. In terms of assembly, homodimer. Probably interacts with PlsY.

It is found in the cytoplasm. The enzyme catalyses a fatty acyl-[ACP] + phosphate = an acyl phosphate + holo-[ACP]. It functions in the pathway lipid metabolism; phospholipid metabolism. Its function is as follows. Catalyzes the reversible formation of acyl-phosphate (acyl-PO(4)) from acyl-[acyl-carrier-protein] (acyl-ACP). This enzyme utilizes acyl-ACP as fatty acyl donor, but not acyl-CoA. The protein is Phosphate acyltransferase of Beijerinckia indica subsp. indica (strain ATCC 9039 / DSM 1715 / NCIMB 8712).